The primary structure comprises 337 residues: Protein-arginine kinase (337 aa).

Residues 12 to 240 enclose the Phosphagen kinase C-terminal domain; it reads IVIASKVKIL…NKLILREKNQ (229 aa). ATP-binding positions include 15–19, 162–166, and 193–198; these read ASKVK, RAKVF, and KSIYNS.

It belongs to the ATP:guanido phosphotransferase family.

It carries out the reaction L-arginyl-[protein] + ATP = N(omega)-phospho-L-arginyl-[protein] + ADP + H(+). In terms of biological role, catalyzes the specific phosphorylation of arginine residues in proteins. The chain is Protein-arginine kinase from Clostridium perfringens (strain ATCC 13124 / DSM 756 / JCM 1290 / NCIMB 6125 / NCTC 8237 / Type A).